We begin with the raw amino-acid sequence, 165 residues long: Thiol peroxidase (165 aa).

A Thioredoxin domain is found at 18-164; it reads RKVGDKAPNF…YEAAIEAAKK (147 aa). The Cysteine sulfenic acid (-SOH) intermediate role is filled by Cys60. An intrachain disulfide couples Cys60 to Cys94.

It belongs to the peroxiredoxin family. Tpx subfamily. As to quaternary structure, homodimer.

The catalysed reaction is a hydroperoxide + [thioredoxin]-dithiol = an alcohol + [thioredoxin]-disulfide + H2O. Its function is as follows. Thiol-specific peroxidase that catalyzes the reduction of hydrogen peroxide and organic hydroperoxides to water and alcohols, respectively. Plays a role in cell protection against oxidative stress by detoxifying peroxides. The sequence is that of Thiol peroxidase from Listeria innocua serovar 6a (strain ATCC BAA-680 / CLIP 11262).